Reading from the N-terminus, the 285-residue chain is MQMWFSQYHTVNVKLDVRIQEQLFSGQSDYQKIDVFKSYEFGKMVALDGEIVFSDTDEFIYDEMVTHVPMAVHPNAKRILIIGGGDGGVAKELIKYPSVEHIDVVETDKMFVDVCRRFFPEVACGLEDERISMFYDDGLRFLRRKHDEYDLIINDSTDPLGHTEGLFTKEFYGSCYKALKDDGIMVYQHGSPFYDEDELECRKMHRKVYKSFPISRVYQAHIPTCPSGYWLFGFASKKYHPLYDLDAKRWDELGLKTWYYTTHLHRGAFMLPKYVEDLLEEEETK.

The 236-residue stretch at 2-237 (QMWFSQYHTV…GYWLFGFASK (236 aa)) folds into the PABS domain. Gln-31 serves as a coordination point for S-methyl-5'-thioadenosine. Asp-86 serves as a coordination point for spermidine. S-methyl-5'-thioadenosine contacts are provided by residues Glu-106 and 137-138 (DG). Asp-155 acts as the Proton acceptor in catalysis. Spermidine is bound at residue 155–158 (DSTD).

This sequence belongs to the spermidine/spermine synthase family. As to quaternary structure, homodimer or homotetramer.

It is found in the cytoplasm. The catalysed reaction is S-adenosyl 3-(methylsulfanyl)propylamine + putrescine = S-methyl-5'-thioadenosine + spermidine + H(+). It functions in the pathway amine and polyamine biosynthesis; spermidine biosynthesis; spermidine from putrescine: step 1/1. Catalyzes the irreversible transfer of a propylamine group from the amino donor S-adenosylmethioninamine (decarboxy-AdoMet) to putrescine (1,4-diaminobutane) to yield spermidine. This is Polyamine aminopropyltransferase from Agathobacter rectalis (strain ATCC 33656 / DSM 3377 / JCM 17463 / KCTC 5835 / VPI 0990) (Eubacterium rectale).